The primary structure comprises 221 residues: Oxaloacetate tautomerase FAHD1, mitochondrial (221 aa).

The N-terminal 24 residues, 1–24 (MASTKPLSRFWEWGKNIVCVGRNY), are a transit peptide targeting the mitochondrion. R22 is an oxalate binding site. The residue at position 37 (S37) is a Phosphoserine. Mg(2+) is bound by residues E68, E70, and D99. K110 bears the N6-acetyllysine mark. Residue K112 is modified to N6-succinyllysine. Residue K120 coordinates oxalate.

It belongs to the FAH family. In terms of assembly, homodimer. The cofactor is Mg(2+). It depends on Mn(2+) as a cofactor. In terms of tissue distribution, ubiquitous with higher expression in the liver and the kidney (at protein level).

The protein resides in the mitochondrion. It localises to the cytoplasm. It is found in the cytosol. The catalysed reaction is oxaloacetate = enol-oxaloacetate. It catalyses the reaction oxaloacetate + H(+) = pyruvate + CO2. The enzyme catalyses a 3-acylpyruvate + H2O = a carboxylate + pyruvate + H(+). It carries out the reaction acetylpyruvate + H2O = acetate + pyruvate + H(+). The catalysed reaction is 3-fumarylpyruvate + H2O = fumarate + pyruvate + H(+). With respect to regulation, oxaloacetate decarboxylation is potently and competitively inhibited by oxalate. Tautomerase that converts enol-oxaloacetate, a strong inhibitor of succinate dehydrogenase, to the physiological keto form of oxaloacetate. It is thereby required to maximize aerobic respiration efficiency by preventing succinate dehydrogenase inhibition. Also acts as a weak oxaloacetate decarboxylase (ODx), catalyzing the decarboxylation of oxaloacetate (OAA) to pyruvate and CO(2), and as such is likely a regulatory enzyme in the TCA cycle. Also displays acylpyruvase activity, being able to hydrolyze acetylpyruvate and fumarylpyruvate in vitro. This is Oxaloacetate tautomerase FAHD1, mitochondrial from Mus musculus (Mouse).